Here is a 101-residue protein sequence, read N- to C-terminus: NAD(P)H-quinone oxidoreductase subunit 4L, chloroplastic (101 aa).

3 helical membrane passes run Met2–Ile22, Met32–Phe52, and Ile61–Val81.

The protein belongs to the complex I subunit 4L family. NDH is composed of at least 16 different subunits, 5 of which are encoded in the nucleus.

The protein resides in the plastid. It is found in the chloroplast thylakoid membrane. The catalysed reaction is a plastoquinone + NADH + (n+1) H(+)(in) = a plastoquinol + NAD(+) + n H(+)(out). It catalyses the reaction a plastoquinone + NADPH + (n+1) H(+)(in) = a plastoquinol + NADP(+) + n H(+)(out). Its function is as follows. NDH shuttles electrons from NAD(P)H:plastoquinone, via FMN and iron-sulfur (Fe-S) centers, to quinones in the photosynthetic chain and possibly in a chloroplast respiratory chain. The immediate electron acceptor for the enzyme in this species is believed to be plastoquinone. Couples the redox reaction to proton translocation, and thus conserves the redox energy in a proton gradient. The sequence is that of NAD(P)H-quinone oxidoreductase subunit 4L, chloroplastic from Liriodendron tulipifera (Tuliptree).